Reading from the N-terminus, the 236-residue chain is 3-deoxy-D-manno-octulosonic acid kinase (236 aa).

Asp-166 is a catalytic residue.

Belongs to the protein kinase superfamily. KdkA/RfaP family.

The protein localises to the cell inner membrane. It carries out the reaction an alpha-Kdo-(2-&gt;6)-lipid IVA + ATP = a 4-O-phospho-alpha-Kdo-(2-&gt;6)-lipid IVA + ADP + H(+). Its pathway is bacterial outer membrane biogenesis; LPS core biosynthesis. In terms of biological role, catalyzes the ATP-dependent phosphorylation of the 3-deoxy-D-manno-octulosonic acid (Kdo) residue in Kdo-lipid IV(A) at the 4-OH position. This chain is 3-deoxy-D-manno-octulosonic acid kinase, found in Photobacterium profundum (strain SS9).